Here is a 378-residue protein sequence, read N- to C-terminus: Signal recognition particle receptor FtsY (378 aa).

GTP-binding positions include 184–191, 266–270, and 330–333; these read GVNGTGKT, DTAGR, and TKLD.

This sequence belongs to the GTP-binding SRP family. FtsY subfamily. In terms of assembly, part of the signal recognition particle protein translocation system, which is composed of SRP and FtsY. SRP is a ribonucleoprotein composed of Ffh and a 4.5S RNA molecule.

The protein resides in the cell membrane. The protein localises to the cytoplasm. It carries out the reaction GTP + H2O = GDP + phosphate + H(+). Functionally, involved in targeting and insertion of nascent membrane proteins into the cytoplasmic membrane. Acts as a receptor for the complex formed by the signal recognition particle (SRP) and the ribosome-nascent chain (RNC). Interaction with SRP-RNC leads to the transfer of the RNC complex to the Sec translocase for insertion into the membrane, the hydrolysis of GTP by both Ffh and FtsY, and the dissociation of the SRP-FtsY complex into the individual components. In Buchnera aphidicola subsp. Acyrthosiphon pisum (strain APS) (Acyrthosiphon pisum symbiotic bacterium), this protein is Signal recognition particle receptor FtsY.